Consider the following 406-residue polypeptide: Phosphorylase b kinase gamma catalytic chain, liver/testis isoform (406 aa).

In terms of domain architecture, Protein kinase spans 24–291; the sequence is YDPKDIIGRG…AEQALQHPFF (268 aa). Residues 30 to 38 and Lys53 contribute to the ATP site; that span reads IGRGVSSVV. Catalysis depends on Asp153, which acts as the Proton acceptor. Residues 306 to 330 form a calmodulin-binding (domain-N) region; the sequence is QRFRVAVWTILAAGRVALSSHRLRP. Residues 346–370 form a calmodulin-binding (domain-C) region; sequence VRRLIDNCAFRLYGHWVKKGEQQNR.

It belongs to the protein kinase superfamily. CAMK Ser/Thr protein kinase family. In terms of assembly, hexadecamer of 4 heterotetramers, each composed of alpha, beta, gamma, and delta subunits. Alpha (PHKA1 or PHKA2) and beta (PHKB) are regulatory subunits, gamma (PHKG1 or PHKG2) is the catalytic subunit, and delta is calmodulin.

The catalysed reaction is 2 ATP + phosphorylase b = 2 ADP + phosphorylase a.. Functionally, catalytic subunit of the phosphorylase b kinase (PHK), which mediates the neural and hormonal regulation of glycogen breakdown (glycogenolysis) by phosphorylating and thereby activating glycogen phosphorylase. May regulate glycogeneolysis in the testis. In vitro, phosphorylates PYGM. The chain is Phosphorylase b kinase gamma catalytic chain, liver/testis isoform (Phkg2) from Mus musculus (Mouse).